Here is a 147-residue protein sequence, read N- to C-terminus: Heavy metal-associated isoprenylated plant protein 27 (147 aa).

Positions Phe-18 to Glu-82 constitute an HMA domain. A metal cation-binding residues include Cys-29 and Cys-32. Residue Cys-144 is modified to Cysteine methyl ester. Residue Cys-144 is the site of S-farnesyl cysteine attachment. The propeptide at Thr-145–Met-147 is removed in mature form.

It belongs to the HIPP family. Interacts with UBP16. Interacts with ZHD11/HB29.

Its subcellular location is the membrane. In terms of biological role, heavy-metal-binding protein. Binds cadmium. May be involved in cadmium transport and play a role in cadmium detoxification. This is Heavy metal-associated isoprenylated plant protein 27 from Arabidopsis thaliana (Mouse-ear cress).